A 222-amino-acid polypeptide reads, in one-letter code: DUF1769 family protein (222 aa).

It belongs to the UPF0590 family.

The protein resides in the cytoplasm. It localises to the nucleus. This Schizosaccharomyces pombe (strain 972 / ATCC 24843) (Fission yeast) protein is DUF1769 family protein.